The chain runs to 429 residues: Small ribosomal subunit protein mS47 (429 aa).

Substrate is bound by residues glutamate 141, glycine 166, glutamate 189, and aspartate 197.

This sequence belongs to the enoyl-CoA hydratase/isomerase family. Mitochondrion-specific ribosomal protein mS47 subfamily. As to quaternary structure, component of the mitochondrial small ribosomal subunit (mt-SSU). Mature yeast 74S mitochondrial ribosomes consist of a small (37S) and a large (54S) subunit. The 37S small subunit contains a 15S ribosomal RNA (15S mt-rRNA) and at least 32 different proteins. The 54S large subunit contains a 21S rRNA (21S mt-rRNA) and at least 45 different proteins. mS47/snr1 forms a protuberance of the yeast mitoribosome and retains a solvent-exposed cavity likely capable of accommodating a substrate, in accordance with it being an active enzyme as well as an integral constituent of the mitoribosome.

The protein resides in the mitochondrion. The enzyme catalyses 3-hydroxy-2-methylpropanoyl-CoA + H2O = 3-hydroxy-2-methylpropanoate + CoA + H(+). It functions in the pathway amino-acid degradation; L-valine degradation. Component of the mitochondrial ribosome (mitoribosome), a dedicated translation machinery responsible for the synthesis of mitochondrial genome-encoded proteins, including at least some of the essential transmembrane subunits of the mitochondrial respiratory chain. The mitoribosomes are attached to the mitochondrial inner membrane and translation products are cotranslationally integrated into the membrane. mS47/snr1 has enzymatic activity in vitro, and is able to catalyze the specific hydrolysis of 3-hydroxyisobutyryl-CoA (HIBYL-CoA). However, because the turnover rate of mS47/snr1 is only a fraction of that of the homologous mammalian enzyme, the physiological function of this activity remains unclear. Has an indirect role in endocytic membrane trafficking. The protein is Small ribosomal subunit protein mS47 (snr1) of Schizosaccharomyces pombe (strain 972 / ATCC 24843) (Fission yeast).